Here is a 412-residue protein sequence, read N- to C-terminus: CCA-adding enzyme (412 aa).

The ATP site is built by Ser41 and Lys44. CTP-binding residues include Ser41 and Lys44. The Mg(2+) site is built by Asp53, Asp55, and Asp106. ATP contacts are provided by His129, Lys149, and Tyr158. The CTP site is built by His129, Lys149, and Tyr158.

The protein belongs to the tRNA nucleotidyltransferase/poly(A) polymerase family. Archaeal CCA-adding enzyme subfamily. In terms of assembly, homodimer. The cofactor is Mg(2+).

The catalysed reaction is a tRNA precursor + 2 CTP + ATP = a tRNA with a 3' CCA end + 3 diphosphate. It catalyses the reaction a tRNA with a 3' CCA end + 2 CTP + ATP = a tRNA with a 3' CCACCA end + 3 diphosphate. Its function is as follows. Catalyzes the addition and repair of the essential 3'-terminal CCA sequence in tRNAs without using a nucleic acid template. Adds these three nucleotides in the order of C, C, and A to the tRNA nucleotide-73, using CTP and ATP as substrates and producing inorganic pyrophosphate. tRNA 3'-terminal CCA addition is required both for tRNA processing and repair. Also involved in tRNA surveillance by mediating tandem CCA addition to generate a CCACCA at the 3' terminus of unstable tRNAs. While stable tRNAs receive only 3'-terminal CCA, unstable tRNAs are marked with CCACCA and rapidly degraded. This is CCA-adding enzyme from Saccharolobus islandicus (strain M.16.27) (Sulfolobus islandicus).